The following is a 286-amino-acid chain: 4-hydroxy-3-methylbut-2-enyl diphosphate reductase (286 aa).

C12 is a binding site for [4Fe-4S] cluster. 2 residues coordinate (2E)-4-hydroxy-3-methylbut-2-enyl diphosphate: H46 and H79. The dimethylallyl diphosphate site is built by H46 and H79. Residues H46 and H79 each coordinate isopentenyl diphosphate. Position 101 (C101) interacts with [4Fe-4S] cluster. H129 serves as a coordination point for (2E)-4-hydroxy-3-methylbut-2-enyl diphosphate. H129 lines the dimethylallyl diphosphate pocket. H129 lines the isopentenyl diphosphate pocket. E131 (proton donor) is an active-site residue. Residue T169 participates in (2E)-4-hydroxy-3-methylbut-2-enyl diphosphate binding. A [4Fe-4S] cluster-binding site is contributed by C198. 3 residues coordinate (2E)-4-hydroxy-3-methylbut-2-enyl diphosphate: S226, N228, and S270. Residues S226, N228, and S270 each coordinate dimethylallyl diphosphate. Residues S226, N228, and S270 each contribute to the isopentenyl diphosphate site.

The protein belongs to the IspH family. [4Fe-4S] cluster serves as cofactor.

It catalyses the reaction isopentenyl diphosphate + 2 oxidized [2Fe-2S]-[ferredoxin] + H2O = (2E)-4-hydroxy-3-methylbut-2-enyl diphosphate + 2 reduced [2Fe-2S]-[ferredoxin] + 2 H(+). The enzyme catalyses dimethylallyl diphosphate + 2 oxidized [2Fe-2S]-[ferredoxin] + H2O = (2E)-4-hydroxy-3-methylbut-2-enyl diphosphate + 2 reduced [2Fe-2S]-[ferredoxin] + 2 H(+). Its pathway is isoprenoid biosynthesis; dimethylallyl diphosphate biosynthesis; dimethylallyl diphosphate from (2E)-4-hydroxy-3-methylbutenyl diphosphate: step 1/1. The protein operates within isoprenoid biosynthesis; isopentenyl diphosphate biosynthesis via DXP pathway; isopentenyl diphosphate from 1-deoxy-D-xylulose 5-phosphate: step 6/6. Catalyzes the conversion of 1-hydroxy-2-methyl-2-(E)-butenyl 4-diphosphate (HMBPP) into a mixture of isopentenyl diphosphate (IPP) and dimethylallyl diphosphate (DMAPP). Acts in the terminal step of the DOXP/MEP pathway for isoprenoid precursor biosynthesis. This Solidesulfovibrio magneticus (strain ATCC 700980 / DSM 13731 / RS-1) (Desulfovibrio magneticus) protein is 4-hydroxy-3-methylbut-2-enyl diphosphate reductase.